Reading from the N-terminus, the 195-residue chain is Urease accessory protein UreG (195 aa).

Residue 9–16 (GPVGSGKT) coordinates GTP.

It belongs to the SIMIBI class G3E GTPase family. UreG subfamily. Homodimer. UreD, UreF and UreG form a complex that acts as a GTP-hydrolysis-dependent molecular chaperone, activating the urease apoprotein by helping to assemble the nickel containing metallocenter of UreC. The UreE protein probably delivers the nickel.

It is found in the cytoplasm. Its function is as follows. Facilitates the functional incorporation of the urease nickel metallocenter. This process requires GTP hydrolysis, probably effectuated by UreG. The protein is Urease accessory protein UreG of Aliarcobacter butzleri (strain RM4018) (Arcobacter butzleri).